The following is a 406-amino-acid chain: Peptidase T (406 aa).

His78 serves as a coordination point for Zn(2+). Asp80 is an active-site residue. Asp139 provides a ligand contact to Zn(2+). Glu173 serves as the catalytic Proton acceptor. Zn(2+) contacts are provided by Glu174, Asp196, and His378.

The protein belongs to the peptidase M20B family. It depends on Zn(2+) as a cofactor.

Its subcellular location is the cytoplasm. The enzyme catalyses Release of the N-terminal residue from a tripeptide.. In terms of biological role, cleaves the N-terminal amino acid of tripeptides. This chain is Peptidase T, found in Clostridium perfringens (strain SM101 / Type A).